A 462-amino-acid chain; its full sequence is Cysteine--tRNA ligase (462 aa).

Residue Cys24 participates in Zn(2+) binding. Residues 26-36 carry the 'HIGH' region motif; it reads PTVYDDAHLGH. Residues Cys199, His224, and Glu228 each contribute to the Zn(2+) site. Positions 256 to 260 match the 'KMSKS' region motif; it reads KMSKS. Residue Lys259 coordinates ATP.

Belongs to the class-I aminoacyl-tRNA synthetase family. As to quaternary structure, monomer. Requires Zn(2+) as cofactor.

It localises to the cytoplasm. It catalyses the reaction tRNA(Cys) + L-cysteine + ATP = L-cysteinyl-tRNA(Cys) + AMP + diphosphate. The sequence is that of Cysteine--tRNA ligase (cysS) from Campylobacter jejuni subsp. jejuni serotype O:2 (strain ATCC 700819 / NCTC 11168).